The chain runs to 165 residues: Nascent polypeptide-associated complex subunit beta (165 aa).

The NAC-A/B domain maps to 33–97 (TTDDKRLQST…PQTKKLQDIL (65 aa)). The segment at 120-165 (QKQAPGAGDVPATIQEEDDDDDVPDLVVGETFETPATEEAPKAAAS) is disordered. The segment covering 134–143 (QEEDDDDDVP) has biased composition (acidic residues). A compositionally biased stretch (low complexity) spans 144–165 (DLVVGETFETPATEEAPKAAAS).

Belongs to the NAC-beta family. In terms of assembly, part of the nascent polypeptide-associated complex (NAC).

The protein is Nascent polypeptide-associated complex subunit beta of Arabidopsis thaliana (Mouse-ear cress).